Consider the following 444-residue polypeptide: Adenylyltransferase and sulfurtransferase UBA4 (444 aa).

ATP contacts are provided by residues G81, D102, 109–113 (SNLHR), K126, and 170–171 (DT). Positions 212 and 215 each coordinate Zn(2+). C229 serves as the catalytic Glycyl thioester intermediate; for adenylyltransferase activity. Zn(2+) is bound by residues C290 and C293. The Rhodanese domain occupies 343–442 (KTKPYVLLDV…YIDEINPSLP (100 aa)). C401 acts as the Cysteine persulfide intermediate; for sulfurtransferase activity in catalysis.

It in the N-terminal section; belongs to the HesA/MoeB/ThiF family. UBA4 subfamily. The cofactor is Zn(2+).

The protein localises to the cytoplasm. The protein resides in the cytosol. It functions in the pathway tRNA modification; 5-methoxycarbonylmethyl-2-thiouridine-tRNA biosynthesis. Functionally, plays a central role in 2-thiolation of mcm(5)S(2)U at tRNA wobble positions of cytosolic tRNA(Lys), tRNA(Glu) and tRNA(Gln). Acts by mediating the C-terminal thiocarboxylation of sulfur carrier URM1. Its N-terminus first activates URM1 as acyl-adenylate (-COAMP), then the persulfide sulfur on the catalytic cysteine is transferred to URM1 to form thiocarboxylation (-COSH) of its C-terminus. The reaction probably involves hydrogen sulfide that is generated from the persulfide intermediate and that acts as a nucleophile towards URM1. Subsequently, a transient disulfide bond is formed. Does not use thiosulfate as sulfur donor; NFS1 probably acting as a sulfur donor for thiocarboxylation reactions. Prior mcm(5) tRNA modification by the elongator complex is required for 2-thiolation. May also be involved in protein urmylation. The sequence is that of Adenylyltransferase and sulfurtransferase UBA4 from Kluyveromyces lactis (strain ATCC 8585 / CBS 2359 / DSM 70799 / NBRC 1267 / NRRL Y-1140 / WM37) (Yeast).